The chain runs to 604 residues: MIPSGLVYLLYPLGFLASLFFGSAFSIQWWLSKKRKEVYAPRSFWILSSIGATLMIVHGTIQSQFPVTVLHVINLIIYLRNLNITSSRPISFRATLVLMALSVVFVTLPFLYVNMEWMASPNIFHLPLPPAQLSWHLIGCLGLAIFSGRFLIQWFYIESNNTKDFPLLFWKIGLLGGLLALVYFIRIGDPINILCYGCGLFPSIANLRLFYKEQRSTPYLDTHCFLSAGEASGDILGGKLIQSIKSLYPNIRFWGVGGPAMRQEGLQPILNMEEFQVSGFAEVLGSLFRLYRNYRKILKTILKHKPATLIFIDFPDFHLLLIKKLRKHGYRGKIIHYVCPSIWAWRPKRKRILEQHLDMLLLILPFEEGLFKNTSLETVYLGHPLVEEISDYKEQASWKEKFLNSDRPIVAAFPGSRRGDISRNLRIQVQAFLNSSLSQTHQFVVSSSSAKYDEIIEDTLKAEGCQHSQIIPMNFRYELMRSCDCALAKCGTIVLETALNQTPTIVMCRLRPFDTFLAKYIFKILLPAYSLPNIIMNSVIFPEFIGGKKDFHPEEIATALDLLNQHGSKEKQKEDCRKLCKVMTTGQIASEEFLKRIFDTLPAV.

Residues 1-220 form a unknown region; sequence MIPSGLVYLL…YKEQRSTPYL (220 aa). Positions 221-604 are lipid-A-disaccharide synthase; it reads DTHCFLSAGE…KRIFDTLPAV (384 aa).

In the C-terminal section; belongs to the LpxB family.

The catalysed reaction is a lipid X + a UDP-2-N,3-O-bis[(3R)-3-hydroxyacyl]-alpha-D-glucosamine = a lipid A disaccharide + UDP + H(+). Its pathway is bacterial outer membrane biogenesis; LPS lipid A biosynthesis. In terms of biological role, condensation of UDP-2,3-diacylglucosamine and 2,3-diacylglucosamine-1-phosphate to form lipid A disaccharide, a precursor of lipid A, a phosphorylated glycolipid that anchors the lipopolysaccharide to the outer membrane of the cell. This Chlamydia pneumoniae (Chlamydophila pneumoniae) protein is Lipid-A-disaccharide synthase (lpxB).